We begin with the raw amino-acid sequence, 450 residues long: Chromosomal replication initiator protein DnaA (450 aa).

A domain I, interacts with DnaA modulators region spans residues 1–79 (MKDSYFDLNT…MEYAYDVAHD (79 aa)). The interval 79–112 (DFFKPELKVIKVVANPVNNQKSNQSNSDFVATDY) is domain II. The tract at residues 113 to 329 (QLNQNFTFDT…GAFNTLTLMA (217 aa)) is domain III, AAA+ region. Residues Gly157, Gly159, Lys160, and Thr161 each coordinate ATP. The segment at 330-450 (RAGRPINVSN…NLSTKIKEKS (121 aa)) is domain IV, binds dsDNA.

The protein belongs to the DnaA family. As to quaternary structure, oligomerizes as a right-handed, spiral filament on DNA at oriC.

Its subcellular location is the cytoplasm. Functionally, plays an essential role in the initiation and regulation of chromosomal replication. ATP-DnaA binds to the origin of replication (oriC) to initiate formation of the DNA replication initiation complex once per cell cycle. Binds the DnaA box (a 9 base pair repeat at the origin) and separates the double-stranded (ds)DNA. Forms a right-handed helical filament on oriC DNA; dsDNA binds to the exterior of the filament while single-stranded (ss)DNA is stabiized in the filament's interior. The ATP-DnaA-oriC complex binds and stabilizes one strand of the AT-rich DNA unwinding element (DUE), permitting loading of DNA polymerase. After initiation quickly degrades to an ADP-DnaA complex that is not apt for DNA replication. Binds acidic phospholipids. This is Chromosomal replication initiator protein DnaA from Oenococcus oeni (strain ATCC BAA-331 / PSU-1).